Here is a 182-residue protein sequence, read N- to C-terminus: Adenine phosphoribosyltransferase 4 (182 aa).

Belongs to the purine/pyrimidine phosphoribosyltransferase family. Homodimer.

It localises to the cytoplasm. It carries out the reaction AMP + diphosphate = 5-phospho-alpha-D-ribose 1-diphosphate + adenine. The protein operates within purine metabolism; AMP biosynthesis via salvage pathway; AMP from adenine: step 1/1. Its function is as follows. Catalyzes a salvage reaction resulting in the formation of AMP, that is energically less costly than de novo synthesis. May contribute to the recycling of adenine into adenylate nucleotides and the inactivation of cytokinins by phosphoribosylation. Possesses low activity toward adenine, but can efficiently convert cytokinins from free bases (active form) to the corresponding nucleotides (inactive form). The polypeptide is Adenine phosphoribosyltransferase 4 (APT4) (Arabidopsis thaliana (Mouse-ear cress)).